A 158-amino-acid chain; its full sequence is Auxin-responsive protein IAA31 (158 aa).

A compositionally biased stretch (low complexity) spans 1–40 (MEVSNSCSSFSSSSVDSTKPSPSESSVNLSLSLTFPSTSP). The disordered stretch occupies residues 1–49 (MEVSNSCSSFSSSSVDSTKPSPSESSVNLSLSLTFPSTSPQREARQDWP). Positions 29-33 (LSLSL) match the EAR-like (transcriptional repression) motif. A PB1 domain is found at 72-157 (SLFVKVYMEG…RRLKITRPER (86 aa)).

The protein belongs to the Aux/IAA family. Homodimers and heterodimers.

It is found in the nucleus. In terms of biological role, aux/IAA proteins are short-lived transcriptional factors that function as repressors of early auxin response genes at low auxin concentrations. Repression is thought to result from the interaction with auxin response factors (ARFs), proteins that bind to the auxin-responsive promoter element (AuxRE). Formation of heterodimers with ARF proteins may alter their ability to modulate early auxin response genes expression. The protein is Auxin-responsive protein IAA31 (IAA31) of Arabidopsis thaliana (Mouse-ear cress).